Consider the following 161-residue polypeptide: Transcription elongation factor GreB (161 aa).

Belongs to the GreA/GreB family. GreB subfamily.

Functionally, necessary for efficient RNA polymerase transcription elongation past template-encoded arresting sites. The arresting sites in DNA have the property of trapping a certain fraction of elongating RNA polymerases that pass through, resulting in locked ternary complexes. Cleavage of the nascent transcript by cleavage factors such as GreA or GreB allows the resumption of elongation from the new 3'terminus. GreB releases sequences of up to 9 nucleotides in length. The sequence is that of Transcription elongation factor GreB from Vibrio cholerae serotype O1 (strain ATCC 39315 / El Tor Inaba N16961).